Here is a 45-residue protein sequence, read N- to C-terminus: Small polypeptide DEVIL 2 (45 aa).

Residues 14–45 (SQSRRLGKYLKEQKGRIYIIRRCVMMLLCSHD) are required for DVL/RTFL small polypeptide activity. Residues 17–33 (RRLGKYLKEQKGRIYII) traverse the membrane as a helical segment.

This sequence belongs to the DVL/RTFL small polypeptides family. As to expression, mostly expressed in stems and, to a lower extent, in roots and leaves.

The protein localises to the cell membrane. Small polypeptide acting as a regulatory molecule which coordinates cellular responses required for differentiation, growth and development, including leaves shape, pedicule elongation, inflorescence organization and fruit maturation, probably by restricting polar cell proliferation in lateral organs and coordinating socket cell recruitment and differentiation at trichome sites. The chain is Small polypeptide DEVIL 2 from Arabidopsis thaliana (Mouse-ear cress).